Here is a 900-residue protein sequence, read N- to C-terminus: Endoglucanase H (900 aa).

Positions 1–44 (MKKRLLVSFLVLSIIVGLLSFQSLGNYNSGLKIGAWVGTQPSES) are cleaved as a signal peptide. The GH26 domain maps to 45-298 (AIKSFQELQG…NSSPEALAAY (254 aa)). Glutamate 131 (proton donor) is an active-site residue. Glutamate 244 serves as the catalytic Nucleophile. The segment at 300 to 630 (EAIGAGSSNP…DTEILNALFN (331 aa)) is catalytic. The tract at residues 303 to 326 (GAGSSNPTPTPTWTSTPPSSSPKA) is disordered. Low complexity predominate over residues 306 to 324 (SSNPTPTPTWTSTPPSSSP). Glutamate 460 (proton donor) is an active-site residue. Glutamate 565 acts as the Nucleophile in catalysis. The 246-residue stretch at 655–900 (AVGEKMLDDF…LLKAISEIPI (246 aa)) folds into the CBM11 domain. In terms of domain architecture, Dockerin spans 827-900 (PSIKHGDLNF…LLKAISEIPI (74 aa)).

In the N-terminal section; belongs to the glycosyl hydrolase 5 (cellulase A) family. It in the C-terminal section; belongs to the glycosyl hydrolase 26 family.

The catalysed reaction is Endohydrolysis of (1-&gt;4)-beta-D-glucosidic linkages in cellulose, lichenin and cereal beta-D-glucans.. This enzyme catalyzes the endohydrolysis of 1,4-beta-glucosidic linkages in cellulose, lichenin and cereal beta-D-glucans. The chain is Endoglucanase H (celH) from Acetivibrio thermocellus (strain ATCC 27405 / DSM 1237 / JCM 9322 / NBRC 103400 / NCIMB 10682 / NRRL B-4536 / VPI 7372) (Clostridium thermocellum).